The primary structure comprises 275 residues: T-cell ecto-ADP-ribosyltransferase 2 (275 aa).

The first 20 residues, 1 to 20 (MPSNICKFFLTWWLIQQVTG), serve as a signal peptide directing secretion. Intrachain disulfides connect cysteine 41-cysteine 243 and cysteine 141-cysteine 193. Residues 61-238 (AKLKVAWEEA…IFLDSPKRKK (178 aa)) enclose the TR mART core domain. NAD(+) is bound by residues tyrosine 98, arginine 146, and glutamine 164. Residue arginine 146 is part of the active site. Serine 167 is an active-site residue. Serine 202 is an NAD(+) binding site. Position 204 is an ADP-ribosylarginine; by autocatalysis (arginine 204). The active site involves glutamate 209. A lipid anchor (GPI-anchor amidated serine) is attached at serine 246. The propeptide at 247–275 (SAGARESCVSLFLVVLPSLLVQLLCLAEP) is removed in mature form.

It belongs to the Arg-specific ADP-ribosyltransferase family. Postthymic T-cells.

The protein resides in the cell membrane. The enzyme catalyses L-arginyl-[protein] + NAD(+) = N(omega)-(ADP-D-ribosyl)-L-arginyl-[protein] + nicotinamide + H(+). The catalysed reaction is NAD(+) + H2O = ADP-D-ribose + nicotinamide + H(+). Has both NAD(+) glycohydrolase and ADP-ribosyltransferase activity (to a lesser extent). This is T-cell ecto-ADP-ribosyltransferase 2 (Art2b) from Rattus norvegicus (Rat).